The sequence spans 737 residues: Phosphoribosylformylglycinamidine synthase subunit PurL (737 aa).

Residue His-50 is part of the active site. ATP-binding residues include Tyr-53 and Lys-92. Glu-94 serves as a coordination point for Mg(2+). Residues 95–98 (SHNH) and Arg-117 each bind substrate. Residue His-96 is the Proton acceptor of the active site. Residue Asp-118 participates in Mg(2+) binding. Gln-241 contributes to the substrate binding site. Asp-269 contacts Mg(2+). 313–315 (ESQ) serves as a coordination point for substrate. ATP contacts are provided by Asp-495 and Gly-532. Residue Asn-533 participates in Mg(2+) binding. Ser-535 is a substrate binding site.

Belongs to the FGAMS family. Monomer. Part of the FGAM synthase complex composed of 1 PurL, 1 PurQ and 2 PurS subunits.

It is found in the cytoplasm. The enzyme catalyses N(2)-formyl-N(1)-(5-phospho-beta-D-ribosyl)glycinamide + L-glutamine + ATP + H2O = 2-formamido-N(1)-(5-O-phospho-beta-D-ribosyl)acetamidine + L-glutamate + ADP + phosphate + H(+). The protein operates within purine metabolism; IMP biosynthesis via de novo pathway; 5-amino-1-(5-phospho-D-ribosyl)imidazole from N(2)-formyl-N(1)-(5-phospho-D-ribosyl)glycinamide: step 1/2. Its function is as follows. Part of the phosphoribosylformylglycinamidine synthase complex involved in the purines biosynthetic pathway. Catalyzes the ATP-dependent conversion of formylglycinamide ribonucleotide (FGAR) and glutamine to yield formylglycinamidine ribonucleotide (FGAM) and glutamate. The FGAM synthase complex is composed of three subunits. PurQ produces an ammonia molecule by converting glutamine to glutamate. PurL transfers the ammonia molecule to FGAR to form FGAM in an ATP-dependent manner. PurS interacts with PurQ and PurL and is thought to assist in the transfer of the ammonia molecule from PurQ to PurL. This is Phosphoribosylformylglycinamidine synthase subunit PurL from Bartonella bacilliformis (strain ATCC 35685 / KC583 / Herrer 020/F12,63).